Here is an 86-residue protein sequence, read N- to C-terminus: Omega-theraphotoxin-Hhn1a 1 (86 aa).

A signal peptide spans 1-21; that stretch reads MKSIVFVALFGLALLAVVCSA. Residues 22–50 constitute a propeptide that is removed on maturation; the sequence is SEDAHKELLKEVVRAMVVDKTDAVQAEER. 3 disulfides stabilise this stretch: C52-C66, C59-C71, and C65-C78.

Belongs to the neurotoxin 10 (Hwtx-1) family. 17 (Hntx-9) subfamily. Expressed by the venom gland.

The protein localises to the secreted. In terms of biological role, ion channel inhibitor. In Cyriopagopus hainanus (Chinese bird spider), this protein is Omega-theraphotoxin-Hhn1a 1.